The primary structure comprises 1049 residues: GPI inositol-deacylase (1049 aa).

A helical membrane pass occupies residues 39–59; it reads ACSAYTLVTTALGFAAFFLML. S222 is a catalytic residue. Helical transmembrane passes span 699–719, 742–762, 798–818, 867–887, 917–937, 944–964, 986–1006, and 1009–1029; these read LWMR…ALVL, CMYS…ITLA, PFFW…CVMV, ILLS…VLCI, SIFI…VVWI, WLTP…ILLV, VFLF…AYVL, and LANI…GLAF.

The protein belongs to the GPI inositol-deacylase family.

Its subcellular location is the endoplasmic reticulum membrane. Functionally, involved in inositol deacylation of GPI-anchored proteins which plays important roles in the quality control and ER-associated degradation of GPI-anchored proteins. The chain is GPI inositol-deacylase (BST1) from Phaeosphaeria nodorum (strain SN15 / ATCC MYA-4574 / FGSC 10173) (Glume blotch fungus).